The sequence spans 232 residues: Early E1A protein (232 aa).

Residues 40-48 are interaction with RB1 in competition with E2F1; the sequence is PTLHDLFDV. Over residues 69–84 the composition is skewed to low complexity; the sequence is TDSSASTEADSGFSPL. The interval 69-97 is disordered; it reads TDSSASTEADSGFSPLSTPPVSPIPPHPT. Positions 85–97 are enriched in pro residues; the sequence is STPPVSPIPPHPT. An LXCXE motif, interaction with host RB1 motif is present at residues 107 to 111; sequence LLCLE. A zinc finger spans residues 146 to 164; sequence CLRCAFYQEQDDNALCGLC. A disordered region spans residues 175–232; the sequence is SAGAEEEDDEVIFVSAKPGGRKRSAATPCEPDGVSKRPCVPEPEQTEPLDLSLKPRPN. Residues 222–226 carry the PXDLS motif, CTBP-binding motif; it reads PLDLS. Positions 228–232 match the Nuclear localization signal motif; the sequence is KPRPN.

Belongs to the adenoviridae E1A protein family. In terms of assembly, interacts with host UBE2I; this interaction interferes with polySUMOylation. Interacts with host RB1; this interaction induces the aberrant dissociation of RB1-E2F1 complex thereby disrupting the activity of RB1 and activating E2F1-regulated genes. Interacts with host ATF7; the interaction enhances ATF7-mediated viral transactivation activity which requires the zinc binding domains of both proteins. Isoform early E1A 32 kDa protein and isoform early E1A 26 kDa protein interact (via N-terminus) with CUL1 and E3 ubiquitin ligase RBX1; these interactions inhibit RBX1-CUL1-dependent elongation reaction of ubiquitin chains and attenuate ubiquitination of SCF(FBXW7) target proteins. Interacts (via PXLXP motif) with host ZMYND11/BS69 (via MYND-type zinc finger); this interaction inhibits E1A mediated transactivation. Interacts with host EP300; this interaction stimulates the acetylation of RB1 by recruiting EP300 and RB1 into a multimeric-protein complex. Interacts with host CTBP1 and CTBP2; this interaction seems to potentiate viral replication. Interacts with host DCAF7. Interacts with host DYRK1A. Interacts with host KPNA4; this interaction allows E1A import into the host nucleus. Interacts with host EP400; this interaction stabilizes MYC. Interacts with host TBP protein; this interaction probably disrupts the TBP-TATA complex.

It is found in the host nucleus. In terms of biological role, plays a role in viral genome replication by driving entry of quiescent cells into the cell cycle. Stimulation of progression from G1 to S phase allows the virus to efficiently use the cellular DNA replicating machinery to achieve viral genome replication. E1A protein has both transforming and trans-activating activities. Induces the disassembly of the E2F1 transcription factor from RB1 by direct competition for the same binding site on RB1, with subsequent transcriptional activation of E2F1-regulated S-phase genes and of the E2 region of the adenoviral genome. Release of E2F1 leads to the ARF-mediated inhibition of MDM2 and causes TP53/p53 to accumulate because it is not targeted for degradation by MDM2-mediated ubiquitination anymore. This increase in TP53, in turn, would arrest the cell proliferation and direct its death but this effect is counteracted by the viral protein E1B-55K. Inactivation of the ability of RB1 to arrest the cell cycle is critical for cellular transformation, uncontrolled cellular growth and proliferation induced by viral infection. Interaction with RBX1 and CUL1 inhibits ubiquitination of the proteins targeted by SCF(FBXW7) ubiquitin ligase complex, and may be linked to unregulated host cell proliferation. The tumorigenesis-restraining activity of E1A may be related to the disruption of the host CtBP-CtIP complex through the CtBP binding motif. This chain is Early E1A protein, found in Canine adenovirus serotype 2 (strain Toronto A 26-61) (CAdV-2).